The following is a 169-amino-acid chain: MILGLALVPSKSFQDEVNAYRKRYDNHYAQIMPHITIKPQFEIDDHDFNLIKNEVKNRISSIKPVEVHATKASNFAPVSNVIYFKVAKTESLEQLFNQFNTEDFYGIAEHPFVPHFTIAQGLTSQEFEDIYGQVKLAGVDHREIIEELSLLQYSEEEDKWTIIETFTLG.

The active-site Proton donor is H34. 2 short sequence motifs (HXTX) span residues 34–37 and 115–118; these read HITI and HFTI. H115 functions as the Proton acceptor in the catalytic mechanism.

The protein belongs to the 2H phosphoesterase superfamily. YjcG family.

The sequence is that of Putative phosphoesterase SE_0715 from Staphylococcus epidermidis (strain ATCC 12228 / FDA PCI 1200).